We begin with the raw amino-acid sequence, 198 residues long: Elongation factor Ts (198 aa).

Residues 81-84 (TDFV) are involved in Mg(2+) ion dislocation from EF-Tu.

The protein belongs to the EF-Ts family.

It is found in the cytoplasm. Functionally, associates with the EF-Tu.GDP complex and induces the exchange of GDP to GTP. It remains bound to the aminoacyl-tRNA.EF-Tu.GTP complex up to the GTP hydrolysis stage on the ribosome. The polypeptide is Elongation factor Ts (Dictyoglomus turgidum (strain DSM 6724 / Z-1310)).